The following is a 516-amino-acid chain: MYTLKEGIDFYIEPMQSKKVTVFDTTLRDGEQTPGVSLTSTQKLEIAHQLDKLGVDIIEAGFPISSEGDKESVKSISNAGLDTTVCGLARVLKKDIDACFESDVGLVHTFVPTSDVQRIYTIKKSREEVIQLAVEAVQYIKDHGLKCMFSAMDATRTDPEYLIEVFKAVQEAGCDIINVPDTVGVMVPSAMYRQIKGIAAEITIPIDVHCHNDFGLAVANSLMAVEAGASQVQVTINGIGERAGNADLSQTVMSLTSIYGAKTNIRTEYLVETSKMVENYTGIRLPPNTPVVGQNAFSHESGIHSQGVLEKSDTFEPGIMTPEMVGHRRRIVLGKHTGKHAVKQSLESAGIKTNDNQLDEIVIRIKEIANKGKQITDADLYAVASAVLGKASSEEELIKLKEVSVMTGNILTPTAVVKADIEGKEIIAARTGVGPVDAALHAVRDILGESNHFRLQDFRIDAITGGADALADVYIGLENEKGRIVTARSANPDIVMASVEALVNAMNLLYKKENKS.

Positions 20 to 271 constitute a Pyruvate carboxyltransferase domain; it reads VTVFDTTLRD…KTNIRTEYLV (252 aa).

This sequence belongs to the alpha-IPM synthase/homocitrate synthase family.

It catalyses the reaction 3-methyl-2-oxobutanoate + acetyl-CoA + H2O = (2S)-2-isopropylmalate + CoA + H(+). It functions in the pathway amino-acid biosynthesis; L-leucine biosynthesis; L-leucine from 3-methyl-2-oxobutanoate: step 1/4. Catalyzes the condensation of the acetyl group of acetyl-CoA with 3-methyl-2-oxobutanoate (2-oxoisovalerate) to form 3-carboxy-3-hydroxy-4-methylpentanoate (2-isopropylmalate). This Methanosarcina mazei (strain ATCC BAA-159 / DSM 3647 / Goe1 / Go1 / JCM 11833 / OCM 88) (Methanosarcina frisia) protein is Probable 2-isopropylmalate synthase (leuA).